Here is a 268-residue protein sequence, read N- to C-terminus: NAC transcription factor 29 (268 aa).

Positions 9–161 (LPPGFRFHPT…EWVLCRIYKK (153 aa)) constitute an NAC domain. Residues 106 to 167 (VGVKKALVFY…IYKKRGASKL (62 aa)) mediate DNA binding.

Expressed in senescing leaves, petals and sepals.

It localises to the nucleus. Transcription activator that binds to, and transactivates the promoter of the abscisic aldehyde oxidase AAO3. Promotes chlorophyll degradation in leaves by enhancing transcription of AAO3, which leads to increased levels of the senescence-inducing hormone abscisic acid (ABA). Involved in the control of dehydration in senescing leaves. Binds to the DNA sequence 5'-CACGTAAGT-3' of SAG113 promoter. SAG113 acts as a negative regulator of ABA signaling for stomatal closure in leaves, and controls water loss during leaf senescence. Transcription factor of the NAC family involved in senescence. May function in the transition between active cell division and cell expansion. Required for normal seed development and morphology. The sequence is that of NAC transcription factor 29 (NAC029) from Arabidopsis thaliana (Mouse-ear cress).